Consider the following 341-residue polypeptide: tRNA N6-adenosine threonylcarbamoyltransferase (341 aa).

Residues H111 and H115 each coordinate Fe cation. Substrate-binding positions include 134–138, D167, G180, and N276; that span reads LVSGG. A Fe cation-binding site is contributed by D304.

Belongs to the KAE1 / TsaD family. Requires Fe(2+) as cofactor.

The protein resides in the cytoplasm. It catalyses the reaction L-threonylcarbamoyladenylate + adenosine(37) in tRNA = N(6)-L-threonylcarbamoyladenosine(37) in tRNA + AMP + H(+). Its function is as follows. Required for the formation of a threonylcarbamoyl group on adenosine at position 37 (t(6)A37) in tRNAs that read codons beginning with adenine. Is involved in the transfer of the threonylcarbamoyl moiety of threonylcarbamoyl-AMP (TC-AMP) to the N6 group of A37, together with TsaE and TsaB. TsaD likely plays a direct catalytic role in this reaction. The polypeptide is tRNA N6-adenosine threonylcarbamoyltransferase (Pseudomonas aeruginosa (strain LESB58)).